Here is a 254-residue protein sequence, read N- to C-terminus: NAD kinase (254 aa).

The active-site Proton acceptor is Asp44. NAD(+) contacts are provided by residues 44-45, 114-115, Asp144, Ala152, 155-160, and Ala179; these read DG, NE, and TAYNYS.

Belongs to the NAD kinase family. A divalent metal cation serves as cofactor.

The protein resides in the cytoplasm. It catalyses the reaction NAD(+) + ATP = ADP + NADP(+) + H(+). Involved in the regulation of the intracellular balance of NAD and NADP, and is a key enzyme in the biosynthesis of NADP. Catalyzes specifically the phosphorylation on 2'-hydroxyl of the adenosine moiety of NAD to yield NADP. The protein is NAD kinase of Cereibacter sphaeroides (strain ATCC 17023 / DSM 158 / JCM 6121 / CCUG 31486 / LMG 2827 / NBRC 12203 / NCIMB 8253 / ATH 2.4.1.) (Rhodobacter sphaeroides).